The sequence spans 240 residues: Ribosomal RNA large subunit methyltransferase E (240 aa).

A compositionally biased stretch (gly residues) spans 1-20; it reads MSKAGGNKGGSRTGGRGGAG. The interval 1–40 is disordered; that stretch reads MSKAGGNKGGSRTGGRGGAGSSNLHVRVKKKAGTTKESSR. The S-adenosyl-L-methionine site is built by Gly92, Trp94, Asp115, Asp131, and Asp155. The active-site Proton acceptor is the Lys195.

Belongs to the class I-like SAM-binding methyltransferase superfamily. RNA methyltransferase RlmE family.

The protein resides in the cytoplasm. The enzyme catalyses uridine(2552) in 23S rRNA + S-adenosyl-L-methionine = 2'-O-methyluridine(2552) in 23S rRNA + S-adenosyl-L-homocysteine + H(+). Functionally, specifically methylates the uridine in position 2552 of 23S rRNA at the 2'-O position of the ribose in the fully assembled 50S ribosomal subunit. The sequence is that of Ribosomal RNA large subunit methyltransferase E from Brucella ovis (strain ATCC 25840 / 63/290 / NCTC 10512).